The following is a 317-amino-acid chain: Iron-uptake system-binding protein (317 aa).

The first 19 residues, 1–19 (MKKISLTLLILLLALTAAA), serve as a signal peptide directing secretion. Cysteine 20 is lipidated: N-palmitoyl cysteine. A lipid anchor (S-diacylglycerol cysteine) is attached at cysteine 20. The region spanning 57-317 (IAITGSVESM…KAAAEKLTQN (261 aa)) is the Fe/B12 periplasmic-binding domain.

The protein belongs to the bacterial solute-binding protein 8 family. In terms of assembly, the complex is composed of one ATP-binding protein (YusV), two transmembrane proteins (FeuB and FeuC) and a solute-binding protein (FeuA).

Its subcellular location is the cell membrane. The protein localises to the cytoplasm. The protein resides in the membrane raft. Its function is as follows. Involved in the uptake of iron. Part of the ABC transporter complex FeuABC/YusV involved in import of the catecholate siderophores bacillibactin and enterobactin. In Bacillus subtilis (strain 168), this protein is Iron-uptake system-binding protein (feuA).